The following is a 94-amino-acid chain: Large ribosomal subunit protein uL23 (94 aa).

The protein belongs to the universal ribosomal protein uL23 family. As to quaternary structure, part of the 50S ribosomal subunit. Contacts protein L29, and trigger factor when it is bound to the ribosome.

In terms of biological role, one of the early assembly proteins it binds 23S rRNA. One of the proteins that surrounds the polypeptide exit tunnel on the outside of the ribosome. Forms the main docking site for trigger factor binding to the ribosome. This is Large ribosomal subunit protein uL23 from Dehalococcoides mccartyi (strain ATCC BAA-2100 / JCM 16839 / KCTC 5957 / BAV1).